Consider the following 444-residue polypeptide: Transcription factor PIF5 (444 aa).

Residues 26-39 form an involved in interaction with phyB region; it reads EDELVELLWRDGQV. Disordered stretches follow at residues 154-265 and 416-444; these read HCGS…NLSE and MLGF…GKIG. Over residues 155 to 171 the composition is skewed to polar residues; sequence CGSNQSTNIHQATTLPV. Positions 175 to 185 are enriched in basic and acidic residues; the sequence is DRSKNVEERLD. Residues 187 to 197 show a composition bias toward low complexity; it reads SSGGSSGCSYG. Over residues 224-244 the composition is skewed to polar residues; it reads ESVSQSDIGLTSTDDQTMGNK. Residues 256–265 are compositionally biased toward basic and acidic residues; that stretch reads RAAEVHNLSE. Residues 256-305 form the bHLH domain; sequence RAAEVHNLSERRRRDRINERMKALQELIPHCSRTDKASILDEAIDYLKSL. A compositionally biased stretch (polar residues) spans 424 to 437; the sequence is GPQSQLSAPATTDS. S437 carries the phosphoserine modification.

As to quaternary structure, homodimer. Interacts specifically with the Pfr form of phytochrome B and with TOC1/APRR1. May form a heterodimer with PIF3. Interacts with PHYB, CRY1 and CRY2 in the nucleus in response to low blue light (LBL). Interacts with TOPP4. Associates to PTAC12/HMR/PAP5 which acts as a transcriptional coactivator. Phosphorylated. Additional phosphorylations induced within 60 seconds following phytochrome B photoactivation. Post-translationally, dephosphorylated by TOPP4 during photomorphogenesis, leading to subsequent degradation of PIF5 by the proteasomal pathway. Mainly expressed in leaves and seedlings, and, to a lower extent, in stems, fruits, flowers and roots.

It is found in the nucleus. Functionally, transcription factor acting negatively in the phytochrome B signaling pathway to promote the shade-avoidance response. Regulates PHYB abundance at the post-transcriptional level, possibly via the ubiquitin-proteasome pathway. Promotes ethylene activity in the dark. May regulate the expression of a subset of genes by binding to the G-box motif. Might be involved in the integration of light-signals to control both circadian and photomorphogenic processes. Activated by CRY1 and CRY2 in response to low blue light (LBL) by direct binding at chromatin on E-box variant 5'-CA[CT]GTG-3' to stimulate specific gene expression to adapt global physiology (e.g. hypocotyl elongation in low blue light). This chain is Transcription factor PIF5, found in Arabidopsis thaliana (Mouse-ear cress).